The sequence spans 128 residues: MKLHLLKSKIHNAIVTSGDLEYEGSITVDSELLKKADMIPNEKVLVVNNNNGERFETYIIKGDHGSRVIQLNGAAARCALPGDEIIIMTFCEIEAEEAPDFKPMVLIVDKNNNPKRRHRIGEEDEQLG.

Residue Ser25 is the Schiff-base intermediate with substrate; via pyruvic acid of the active site. Residue Ser25 is modified to Pyruvic acid (Ser). Thr57 is a binding site for substrate. Tyr58 acts as the Proton donor in catalysis. 73–75 (GAA) is a binding site for substrate.

Belongs to the PanD family. As to quaternary structure, heterooctamer of four alpha and four beta subunits. Pyruvate serves as cofactor. In terms of processing, is synthesized initially as an inactive proenzyme, which is activated by self-cleavage at a specific serine bond to produce a beta-subunit with a hydroxyl group at its C-terminus and an alpha-subunit with a pyruvoyl group at its N-terminus.

It is found in the cytoplasm. The enzyme catalyses L-aspartate + H(+) = beta-alanine + CO2. It participates in cofactor biosynthesis; (R)-pantothenate biosynthesis; beta-alanine from L-aspartate: step 1/1. Its function is as follows. Catalyzes the pyruvoyl-dependent decarboxylation of aspartate to produce beta-alanine. The polypeptide is Aspartate 1-decarboxylase (Chlorobium phaeovibrioides (strain DSM 265 / 1930) (Prosthecochloris vibrioformis (strain DSM 265))).